A 448-amino-acid polypeptide reads, in one-letter code: MGPPPAARRREGEPDNQDPAGLLTDKYELTMLAAALRDGSANRPTTFEVFARRLPTGRRYGVVAGTGRLLEALPQFRFDADACELLAQFLDPATVRYLREFRFRGDIDGYAEGELYFPGSPVLSVRGSFAECVLLETLVLSIFNHDTAIASAAARMVSAAGGRPLIEMGSRRTHERAAVAAARAAYIAGFAASSNLAAQRRYGVPAHGTAAHAFTMLHAQHGGPTELAERAAFRAQVEALGPGTTLLVDTYDVTTGVANAVAAAGAELGAIRIDSGELGVLARQAREQLDRLGATRTRIVVSGDLDEFSIAALRGEPVDSYGVGTSLVTGSGAPTANMVYKLVEVDGVPVQKRSSYKESPGGRKEALRRSRATGTITEELVHPAGRPPVIVEPHRVLTLPLVRAGQPVADTSLAAARQLVASGLRSLPGDGLKLAPGEPAIPTRTIPA.

The disordered stretch occupies residues 1 to 21 (MGPPPAARRREGEPDNQDPAG). Phosphohistidine is present on histidine 212. Residues 353–372 (RSSYKESPGGRKEALRRSRA) form a disordered region.

It belongs to the NAPRTase family. Transiently phosphorylated on a His residue during the reaction cycle. Phosphorylation strongly increases the affinity for substrates and increases the rate of nicotinate D-ribonucleotide production. Dephosphorylation regenerates the low-affinity form of the enzyme, leading to product release.

It catalyses the reaction nicotinate + 5-phospho-alpha-D-ribose 1-diphosphate + ATP + H2O = nicotinate beta-D-ribonucleotide + ADP + phosphate + diphosphate. Its pathway is cofactor biosynthesis; NAD(+) biosynthesis; nicotinate D-ribonucleotide from nicotinate: step 1/1. Its function is as follows. Involved in the Preiss-Handler pathway, which is a recycling route that permits the salvage of free nicotinamide (NM) and nicotinic acid (Na) involved in the NAD biosynthesis. Catalyzes the synthesis of beta-nicotinate D-ribonucleotide from nicotinate and 5-phospho-D-ribose 1-phosphate at the expense of ATP. It is not able to use nicotinamide. PncB1 contributes to basal NAD level. The chain is Nicotinate phosphoribosyltransferase pncB1 (pncB1) from Mycobacterium tuberculosis (strain ATCC 25618 / H37Rv).